A 256-amino-acid chain; its full sequence is Large ribosomal subunit protein eL8A (256 aa).

Residues 1–37 form a disordered region; it reads MAPGKKVAPAPFGAKSTKSNKTRNPLTHSTPKNFGIG. Residues 16–32 show a composition bias toward polar residues; that stretch reads STKSNKTRNPLTHSTPK.

This sequence belongs to the eukaryotic ribosomal protein eL8 family. As to quaternary structure, component of the large ribosomal subunit (LSU). Mature yeast ribosomes consist of a small (40S) and a large (60S) subunit. The 40S small subunit contains 1 molecule of ribosomal RNA (18S rRNA) and 33 different proteins (encoded by 57 genes). The large 60S subunit contains 3 rRNA molecules (25S, 5.8S and 5S rRNA) and 46 different proteins (encoded by 81 genes).

Its subcellular location is the cytoplasm. Its function is as follows. Component of the ribosome, a large ribonucleoprotein complex responsible for the synthesis of proteins in the cell. The small ribosomal subunit (SSU) binds messenger RNAs (mRNAs) and translates the encoded message by selecting cognate aminoacyl-transfer RNA (tRNA) molecules. The large subunit (LSU) contains the ribosomal catalytic site termed the peptidyl transferase center (PTC), which catalyzes the formation of peptide bonds, thereby polymerizing the amino acids delivered by tRNAs into a polypeptide chain. The nascent polypeptides leave the ribosome through a tunnel in the LSU and interact with protein factors that function in enzymatic processing, targeting, and the membrane insertion of nascent chains at the exit of the ribosomal tunnel. This is Large ribosomal subunit protein eL8A from Saccharomyces cerevisiae (strain ATCC 204508 / S288c) (Baker's yeast).